A 324-amino-acid polypeptide reads, in one-letter code: Holliday junction branch migration complex subunit RuvB (324 aa).

The segment at 1-168 (MEDLALRPKT…FGIVEHLEYY (168 aa)) is large ATPase domain (RuvB-L). Tyr-14, Ile-15, Gly-48, Lys-51, Thr-52, Thr-53, Asp-97, Thr-146, Tyr-168, and Arg-205 together coordinate ATP. A Mg(2+)-binding site is contributed by Thr-52. The segment at 169–239 (TPEELAQGVM…RALEALAALG (71 aa)) is small ATPAse domain (RuvB-S). The tract at residues 242 to 324 (ELGLEKRDRE…PPPVGPLLEP (83 aa)) is head domain (RuvB-H). Arg-297 and Arg-302 together coordinate DNA.

Belongs to the RuvB family. In terms of assembly, homohexamer. Forms a complex with RuvA. Electron microscopic images suggest 2 closely interacting RuvA tetramers sandwich the HJ DNA; each tetramer associates with an RuvB hexamer. Forms 2 complexes with Holliday junction (HJ) DNA which probably have 1 and 2 RuvA tetramers per complex (called complex I and complex II). Forms an RuvA(8)-RuvB(12)-Holliday junction (HJ) complex. HJ DNA is sandwiched between 2 RuvA tetramers; dsDNA enters through RuvA and exits via RuvB. An RuvB hexamer assembles on each DNA strand where it exits the tetramer. Each RuvB hexamer is contacted by two RuvA subunits (via domain III) on 2 adjacent RuvB subunits; this complex drives branch migration. In the full resolvosome a probable DNA-RuvA(4)-RuvB(12)-RuvC(2) complex forms which resolves the HJ. Requires Mg(2+) as cofactor.

The protein localises to the cytoplasm. The catalysed reaction is ATP + H2O = ADP + phosphate + H(+). The activity of RuvB is enhanced by E.coli RuvA. In terms of biological role, the RuvA-RuvB-RuvC complex processes Holliday junction (HJ) DNA during genetic recombination and DNA repair, while the RuvA-RuvB complex plays an important role in the rescue of blocked DNA replication forks via replication fork reversal (RFR). RuvA specifically binds to HJ cruciform DNA, conferring on it an open structure. The RuvB hexamer acts as an ATP-dependent pump, pulling dsDNA into and through the RuvAB complex. RuvB forms 2 homohexamers on either side of HJ DNA bound by 1 or 2 RuvA tetramers; 4 subunits per hexamer contact DNA at a time. Coordinated motions by a converter formed by DNA-disengaged RuvB subunits stimulates ATP hydrolysis and nucleotide exchange. Immobilization of the converter enables RuvB to convert the ATP-contained energy into a lever motion, pulling 2 nucleotides of DNA out of the RuvA tetramer per ATP hydrolyzed, thus driving DNA branch migration. The RuvB motors rotate together with the DNA substrate, which together with the progressing nucleotide cycle form the mechanistic basis for DNA recombination by continuous HJ branch migration. Branch migration allows RuvC to scan DNA until it finds its consensus sequence, where it cleaves and resolves cruciform DNA. Its function is as follows. RuvB is a Mg(2+)-dependent, DNA-dependent ATPase with an equal preference for supercoiled and linear dsDNA; all (d)NTPs tested were efficiently hydrolyzed. Promotes Holliday junction (HJ) dissociation at 60 degrees Celsius in the presence of ATP but not ATP-gamma-S or ADP; (d)ATP, (d)CTP and dTTP also power dissociation in the absence of any RuvA. RuvA stimulates the ATPase of RuvB in the presence of dsDNA and HJ branch migration by RuvB. Excess RuvB stimulates some branch migration in vitro even in the presence of mutant RuvA. The polypeptide is Holliday junction branch migration complex subunit RuvB (Thermus thermophilus (strain ATCC 27634 / DSM 579 / HB8)).